Consider the following 90-residue polypeptide: Small ribosomal subunit protein bS20 (90 aa).

The segment at 1 to 25 (MANSAQARKRARQAAKANSHNSALR) is disordered.

It belongs to the bacterial ribosomal protein bS20 family.

Functionally, binds directly to 16S ribosomal RNA. This Burkholderia multivorans (strain ATCC 17616 / 249) protein is Small ribosomal subunit protein bS20.